A 522-amino-acid polypeptide reads, in one-letter code: Proactivator polypeptide-like 1 (522 aa).

Residues 1 to 17 (MLCALILWSGLLGAARA) form the signal peptide. The propeptide occupies 18–59 (SPISVPRECAKGSEVWCQDLQAAAKCRAVRHCQSAVWNKPTV). The region spanning 19-59 (PISVPRECAKGSEVWCQDLQAAAKCRAVRHCQSAVWNKPTV) is the Saposin A-type 1 domain. Saposin B-type domains are found at residues 60–144 (KSLP…EPLQ), 183–261 (EGAV…ERES), 291–371 (LGLT…GSKR), and 393–474 (QGSF…HGPK). 3 disulfide bridges follow: cysteine 64–cysteine 140, cysteine 67–cysteine 134, and cysteine 95–cysteine 107. A propeptide spanning residues 146 to 183 (HLAETTSERPLTQEDANEVMAPFLSNGALSFHPSQMPE) is cleaved from the precursor. Disulfide bonds link cysteine 187–cysteine 257, cysteine 190–cysteine 251, and cysteine 216–cysteine 227. An N-linked (GlcNAc...) asparagine glycan is attached at asparagine 204. A propeptide spanning residues 261 to 290 (SAHWLTRVAAVDGVPSLEMEMPRTNELQMQ) is cleaved from the precursor. Cystine bridges form between cysteine 295-cysteine 367, cysteine 298-cysteine 361, and cysteine 326-cysteine 337. A glycan (N-linked (GlcNAc...) (high mannose) asparagine) is linked at asparagine 312. Residues 371 to 392 (RRARSISRAVATTPSLPVDEEN) constitute a propeptide that is removed on maturation. 3 disulfides stabilise this stretch: cysteine 397/cysteine 470, cysteine 400/cysteine 464, and cysteine 428/cysteine 439. Positions 475–522 (TPLLGTDQCVMGPSFWCKSPEAAEMCNALEHCQRLVWKKPVSKINEQP) are excised as a propeptide. The Saposin A-type 2 domain maps to 476–516 (PLLGTDQCVMGPSFWCKSPEAAEMCNALEHCQRLVWKKPVS).

It is found in the secreted. Its function is as follows. May activate the lysosomal degradation of sphingolipids. The protein is Proactivator polypeptide-like 1 (Psapl1) of Mus musculus (Mouse).